We begin with the raw amino-acid sequence, 569 residues long: Atlastin-2 (569 aa).

Positions 1–49 (MAEGGSLRNRTRFGSRSNEAMNHVDYPDENFVEEIQLNSDTEVMEKPRP) are N-terminal hypervariable region (HVR). Over 1–464 (MAEGGSLRNR…NIFYAARTPA (464 aa)) the chain is Cytoplasmic. The GB1/RHD3-type G domain occupies 80–324 (DLNVVVLSVA…LVPLLLAPEN (245 aa)). R93, K94, G95, K96, S97, F98, Q163, R232, and D233 together coordinate GDP. R93, K94, G95, K96, S97, and F98 together coordinate GTP. Residue S97 participates in Mg(2+) binding. Positions 232 and 233 each coordinate GTP. The stretch at 244–272 (LEGGNKFLEKRLQVKQNQHEELQNVRKHI) forms a coiled coil. Residues V291 and N294 each coordinate GDP. GTP is bound at residue V291. Residues 362 to 453 (MLQATAEANN…YANFLKHNDG (92 aa)) are 3HB (three-helix bundle) domain. The segment at 454-462 (KNIFYAART) is linker. A helical transmembrane segment spans residues 465–485 (TLFAVMFAMYIISGLTGFIGM). The Lumenal portion of the chain corresponds to 486–487 (NS). The chain crosses the membrane as a helical span at residues 488 to 508 (IATICNLIMGLTLLSFCTWAY). Residues 509–569 (VKYSGEFREL…DQVSGRLKTN (61 aa)) lie on the Cytoplasmic side of the membrane. An autoinhibitory domain region spans residues 535-569 (KPLSDNLMEDNIRQTVRNSIKAGLTDQVSGRLKTN).

The protein belongs to the TRAFAC class dynamin-like GTPase superfamily. GB1/RHD3 GTPase family. GB1 subfamily. As to quaternary structure, monomeric and homodimeric. The homodimer, transiently formed by two molecules on opposing membranes, is the active form mediating ER membrane fusion.

The protein localises to the endoplasmic reticulum membrane. It catalyses the reaction GTP + H2O = GDP + phosphate + H(+). Its function is as follows. Atlastin-2 (ATL2) is a membrane-anchored GTPase that mediates the GTP-dependent fusion of endoplasmic reticulum (ER) membranes, maintaining the continuous ER network. It facilitates the formation of three-way junctions where ER tubules intersect. Two atlastin-2 on neighboring ER tubules bind GTP and form loose homodimers through the GB1/RHD3-type G domains and 3HB regions. Upon GTP hydrolysis, the 3HB regions tighten, pulling the membranes together to drive their fusion. After fusion, the homodimer disassembles upon release of inorganic phosphate (Pi). Subsequently, GDP dissociates, resetting the monomers to a conformation ready for a new fusion cycle. This chain is Atlastin-2 (atl2), found in Xenopus laevis (African clawed frog).